We begin with the raw amino-acid sequence, 908 residues long: Serine/threonine-protein kinase WARTS homolog (908 aa).

Positions Glu-42–Ser-70 form a coiled coil. Composition is skewed to low complexity over residues Val-115–Ser-125 and Pro-168–Glu-181. 4 disordered regions span residues Val-115–Lys-134, Met-162–Ser-183, Asn-203–Pro-225, and Lys-388–Pro-412. A compositionally biased stretch (pro residues) spans Gln-392–Pro-404. A coiled-coil region spans residues Tyr-439–Leu-470. The 306-residue stretch at Phe-502–Phe-807 folds into the Protein kinase domain. ATP is bound by residues Ile-508 to Val-516 and Lys-531. Asp-625 acts as the Proton acceptor in catalysis. In terms of domain architecture, AGC-kinase C-terminal spans Arg-808–Gly-874.

This sequence belongs to the protein kinase superfamily. AGC Ser/Thr protein kinase family. Interacts (via N-terminus) with yap-1 (via WW domain). Mg(2+) serves as cofactor. Expressed in muscles and epithelial tissues including pharynx, intestine and hypodermis. Expressed in vulval and spermathecal seam cells.

The protein localises to the cytoplasm. Its subcellular location is the apical cell membrane. It catalyses the reaction L-seryl-[protein] + ATP = O-phospho-L-seryl-[protein] + ADP + H(+). It carries out the reaction L-threonyl-[protein] + ATP = O-phospho-L-threonyl-[protein] + ADP + H(+). Phosphorylates yap-1 which may negatively regulate yap-1 nuclear localization. Plays an essential role in larval development. Regulates growth, the formation of gut granules, lifespan and cell and body sizes probably in synergy with the TGF-beta sma/mab pathway. Does not appear to regulate apoptosis and proliferation. In addition, may synergize with the TGF-beta daf-7 dauer pathway to regulate entry into the dauer stage. Maintains the cellular integrity of intestinal cells by regulating the localization of apical actin and junctional proteins. The protein is Serine/threonine-protein kinase WARTS homolog of Caenorhabditis elegans.